The chain runs to 197 residues: Glycerol-3-phosphate acyltransferase (197 aa).

5 consecutive transmembrane segments (helical) span residues 1–21 (MNIL…GFLI), 78–98 (LIEV…IWLG), 111–131 (MFLA…LIVL), 136–155 (FVSL…MFFY), and 159–176 (FIHT…LVIW).

Belongs to the PlsY family. As to quaternary structure, probably interacts with PlsX.

Its subcellular location is the cell inner membrane. It catalyses the reaction an acyl phosphate + sn-glycerol 3-phosphate = a 1-acyl-sn-glycero-3-phosphate + phosphate. It participates in lipid metabolism; phospholipid metabolism. Its function is as follows. Catalyzes the transfer of an acyl group from acyl-phosphate (acyl-PO(4)) to glycerol-3-phosphate (G3P) to form lysophosphatidic acid (LPA). This enzyme utilizes acyl-phosphate as fatty acyl donor, but not acyl-CoA or acyl-ACP. This Prochlorococcus marinus (strain MIT 9215) protein is Glycerol-3-phosphate acyltransferase.